The sequence spans 315 residues: MTDSNANRPPRLPRREVHGVLLLDKPLGLSSNDALVRAKRLLRAAKAGHTGTLDPLATGLLPLCFGEATKFSQDLLEADKTYDAEVRLGARSSTGDAEGELLDVRAVTCDRAAVEQALEGFIGEIEQVPPMHSALKKDGRPLYEYARAGQTVERAARRVTIRSIALLECALPGAPSFTMRVTCSKGTYIRTLAEDIGEALGCGAHLTGLRRIAVGDLTLDGAVTLAQIEAQDDAQRPAMLAPVDALLQKCVPVQLDAAAAGRFLQGQRIAQRDLPVGTALAENSLARVYAGEPSRLLGVARMREGALRPERLVKL.

Asp-54 serves as the catalytic Nucleophile.

This sequence belongs to the pseudouridine synthase TruB family. Type 1 subfamily.

It catalyses the reaction uridine(55) in tRNA = pseudouridine(55) in tRNA. In terms of biological role, responsible for synthesis of pseudouridine from uracil-55 in the psi GC loop of transfer RNAs. This chain is tRNA pseudouridine synthase B, found in Cupriavidus taiwanensis (strain DSM 17343 / BCRC 17206 / CCUG 44338 / CIP 107171 / LMG 19424 / R1) (Ralstonia taiwanensis (strain LMG 19424)).